The primary structure comprises 192 residues: UPF0301 protein Bcep1808_0798 (192 aa).

It belongs to the UPF0301 (AlgH) family.

The protein is UPF0301 protein Bcep1808_0798 of Burkholderia vietnamiensis (strain G4 / LMG 22486) (Burkholderia cepacia (strain R1808)).